Here is a 481-residue protein sequence, read N- to C-terminus: Tripartite motif-containing protein 10 (481 aa).

The RING-type zinc-finger motif lies at 16-61 (CPICQGTLREPVTIDCGHNFCRACLTRYCEIPGPDLEESPTCPLCK). A B box-type zinc finger spans residues 94-135 (GEEDVCQEHGEKIYFFCEDDEMQLCVVCREAGEHATHTMRFL). Positions 99, 102, 121, and 127 each coordinate Zn(2+). The stretch at 150–177 (LKCLRKEREEIQEIQSRENKRMQVLLTQ) forms a coiled coil. The B30.2/SPRY domain occupies 292–481 (REMKMFLEKL…GRGSSFSLSS (190 aa)).

The protein belongs to the TRIM/RBCC family. Interacts with IFNAR1; this interaction prevents association of IFNAR1 with TYK2.

It is found in the cytoplasm. In terms of biological role, E3 ligase that plays an essential role in the differentiation and survival of terminal erythroid cells. May directly bind to PTEN and promote its ubiquitination, resulting in its proteasomal degradation and activation of hypertrophic signaling. In addition, plays a role in immune response regulation by repressing the phosphorylation of STAT1 and STAT2 in the interferon/JAK/STAT signaling pathway independent of its E3 ligase activity. Mechanistically, interacts with the intracellular domain of IFNAR1 and thereby inhibits the association between TYK2 and IFNAR1. The chain is Tripartite motif-containing protein 10 (TRIM10) from Homo sapiens (Human).